Consider the following 355-residue polypeptide: C-C chemokine receptor type 1 (355 aa).

The Extracellular segment spans residues 1 to 34; sequence MEISDFTEAYPTTTEFDYGDSTPCQKTAVRAFGA. A helical membrane pass occupies residues 35–60; it reads GLLPPLYSLVFIIGVVGNVLVILVLM. Over 61–64 the chain is Cytoplasmic; the sequence is QHRR. Residues 65–91 traverse the membrane as a helical segment; sequence LQSMTSIYLFNLAVSDLVFLFTLPFWI. At 92-107 the chain is on the extracellular side; the sequence is DYKLKDDWIFGDAMCK. Cysteine 106 and cysteine 183 are disulfide-bonded. A helical transmembrane segment spans residues 108–129; it reads LLSGFYYLGLYSEIFFIILLTI. The Cytoplasmic portion of the chain corresponds to 130–146; the sequence is DRYLAIVHAVFALRART. Residues 147–171 traverse the membrane as a helical segment; sequence VTFGIITSIITWALAILASMPALYF. The Extracellular portion of the chain corresponds to 172–197; sequence FKAQWEFTHRTCSPHFPYKSLKQWKR. The helical transmembrane segment at 198-223 threads the bilayer; the sequence is FQALKLNLLGLILPLLVMIICYAGII. The Cytoplasmic segment spans residues 224-239; that stretch reads RILLRRPSEKKVKAVR. A helical transmembrane segment spans residues 240–264; the sequence is LIFAITLLFFLLWTPYNLSVFVSAF. Residues 265–281 lie on the Extracellular side of the membrane; that stretch reads QDVLFTNQCEQSKQLDL. Residues 282-305 traverse the membrane as a helical segment; the sequence is AMQVTEVIAYTHCCVNPIIYVFVG. The Cytoplasmic portion of the chain corresponds to 306–355; the sequence is ERFWKYLRQLFQRHVAIPLAKWLPFLSVDQLERTSSISPSTGEHELSAGF.

Belongs to the G-protein coupled receptor 1 family. Interacts with CREB3. Interacts with CCL3. Interacts with CCL15. Interacts with CCL23. Interacts with GNAI1. Interacts with PF4/CXCL4. Detected in the heart, spleen, lung, peritoneal exudate cells and leukocytes.

It localises to the cell membrane. Chemokine receptor that plays a crucial role in regulating immune cell migration, inflammation, and immune responses. Contributes to the inflammatory response by recruiting immune cells, such as monocytes, macrophages, T-cells, and dendritic cells, to sites of inflammation for the clearance of pathogens and the resolution of tissue damage. When activated by its ligands including CCL3, CCL5-9, CCL13-16 and CCL23, triggers a signaling cascade within immune cells, leading to their migration towards the source of the chemokine. For example, mediates neutrophil migration after activation by CCL3 leading to the sequential release of TNF-alpha and leukotriene B4. Also mediates monocyte migration upon CXCL4 binding. Activation by CCL5 results in neuroinflammation through the ERK1/2 signaling pathway. The polypeptide is C-C chemokine receptor type 1 (Ccr1) (Mus musculus (Mouse)).